The sequence spans 352 residues: Phosphate acetyltransferase (352 aa).

This sequence belongs to the phosphate acetyltransferase and butyryltransferase family.

Its subcellular location is the cytoplasm. It carries out the reaction acetyl-CoA + phosphate = acetyl phosphate + CoA. Its pathway is metabolic intermediate biosynthesis; acetyl-CoA biosynthesis; acetyl-CoA from acetate: step 2/2. This is Phosphate acetyltransferase (pta) from Borreliella burgdorferi (strain ATCC 35210 / DSM 4680 / CIP 102532 / B31) (Borrelia burgdorferi).